We begin with the raw amino-acid sequence, 561 residues long: Carbohydrate sulfotransferase 15 (561 aa).

Topologically, residues Met-1 to Cys-80 are cytoplasmic. Residues Ser-81–Ala-101 form a helical; Signal-anchor for type II membrane protein membrane-spanning segment. Topologically, residues His-102 to Thr-561 are lumenal. A 3'-phosphoadenylyl sulfate-binding site is contributed by Lys-263–Thr-267. N-linked (GlcNAc...) asparagine glycosylation occurs at Asn-364. Residues Arg-392 and Ser-400 each contribute to the 3'-phosphoadenylyl sulfate site.

Belongs to the sulfotransferase 1 family. As to quaternary structure, homodimer; disulfide-linked (Potential). The relevance of homodimerization is however unsure. May interact with phosphorylated proteins in resting B-cells, including HCK. A divalent metal cation serves as cofactor. Glutathione is required as a cofactor. Glycosylated.

It localises to the golgi apparatus membrane. The enzyme catalyses dermatan 4'-sulfate + n 3'-phosphoadenylyl sulfate = dermatan 4',6'-bissulfate + n adenosine 3',5'-bisphosphate + n H(+). It carries out the reaction chondroitin 4'-sulfate + n 3'-phosphoadenylyl sulfate = chondroitin 4',6'-bissulfate + n adenosine 3',5'-bisphosphate + n H(+). Inhibited by phenyl beta-GalNAc(4,6-SO(4)). Sulfotransferase that transfers sulfate from 3'-phosphoadenosine 5'-phosphosulfate (PAPS) to the C-6 hydroxyl group of the GalNAc 4-sulfate residue of chondroitin sulfate A and forms chondroitin sulfate E containing GlcA-GalNAc(4,6-SO(4)) repeating units. It also transfers sulfate to a unique non-reducing terminal sequence, GalNAc(4SO4)-GlcA(2SO4)-GalNAc(6SO4), to yield a highly sulfated structure similar to the structure found in thrombomodulin chondroitin sulfate. May also act as a B-cell receptor involved in BCR ligation-mediated early activation that mediate regulatory signals key to B-cell development and/or regulation of B-cell-specific RAG expression; however such results are unclear in vivo. This is Carbohydrate sulfotransferase 15 (Chst15) from Rattus norvegicus (Rat).